Here is a 105-residue protein sequence, read N- to C-terminus: Toxin ParE2 (105 aa).

Belongs to the RelE toxin family.

In terms of biological role, toxic component of a type II toxin-antitoxin (TA) system. Its toxic effect is neutralized by coexpression with cognate antitoxin ParD2. The sequence is that of Toxin ParE2 (parE2) from Mycobacterium tuberculosis (strain CDC 1551 / Oshkosh).